A 74-amino-acid polypeptide reads, in one-letter code: uncharacterized protein (74 aa).

This is an uncharacterized protein from Staphylococcus aureus.